The following is an 837-amino-acid chain: Cap-specific mRNA (nucleoside-2'-O-)-methyltransferase 1 (837 aa).

A disordered region spans residues M1–F66. The short motif at K2 to R18 is the Bipartite nuclear localization signal element. S27, S30, and S52 each carry phosphoserine. Positions T56 to F66 are enriched in basic and acidic residues. The region spanning Y86 to Q132 is the G-patch domain. A Phosphoserine modification is found at S90. K107 is modified (N6-acetyllysine). Substrate is bound by residues K202–D206 and R217. The region spanning F230 to K449 is the RrmJ-type SAM-dependent 2'-O-MTase domain. N233 is an S-adenosyl-L-methionine binding site. K238 is an active-site residue. Residues C276 to F282 and D334 to I335 each bind S-adenosyl-L-methionine. D363 is a catalytic residue. Position 373–375 (N373–Q375) interacts with substrate. Residue K403 is the Proton acceptor of the active site. N438 provides a ligand contact to substrate. Residues S726–P834 form an interaction with POLR2A region. Residues R751–E785 form the WW domain.

Interacts with POLR2A (via C-terminus).

Its subcellular location is the nucleus. The catalysed reaction is a 5'-end (N(7)-methyl 5'-triphosphoguanosine)-ribonucleoside in mRNA + S-adenosyl-L-methionine = a 5'-end (N(7)-methyl 5'-triphosphoguanosine)-(2'-O-methyl-ribonucleoside) in mRNA + S-adenosyl-L-homocysteine + H(+). Its function is as follows. S-adenosyl-L-methionine-dependent methyltransferase that mediates mRNA cap1 2'-O-ribose methylation to the 5'-cap structure of mRNAs. Methylates the ribose of the first nucleotide of a m(7)GpppG-capped mRNA and small nuclear RNA (snRNA) to produce m(7)GpppRm (cap1). Displays a preference for cap0 transcripts. Cap1 modification is linked to higher levels of translation. May be involved in the interferon response pathway. The sequence is that of Cap-specific mRNA (nucleoside-2'-O-)-methyltransferase 1 (Cmtr1) from Mus musculus (Mouse).